Here is a 174-residue protein sequence, read N- to C-terminus: Peptidyl-prolyl cis-trans isomerase-like 1 (174 aa).

The PPIase cyclophilin-type domain maps to 5–159; sequence SPTYVTFDTS…EEIKIHRARL (155 aa).

Belongs to the cyclophilin-type PPIase family. PPIL1 subfamily.

The catalysed reaction is [protein]-peptidylproline (omega=180) = [protein]-peptidylproline (omega=0). PPIases accelerate the folding of proteins. It catalyzes the cis-trans isomerization of proline imidic peptide bonds in oligopeptides. This chain is Peptidyl-prolyl cis-trans isomerase-like 1 (CYP1), found in Cryptococcus neoformans var. neoformans serotype D (strain B-3501A) (Filobasidiella neoformans).